Reading from the N-terminus, the 882-residue chain is Alanine--tRNA ligase (882 aa).

Zn(2+)-binding residues include His-570, His-574, Cys-672, and His-676.

Belongs to the class-II aminoacyl-tRNA synthetase family. Zn(2+) is required as a cofactor.

It localises to the cytoplasm. It catalyses the reaction tRNA(Ala) + L-alanine + ATP = L-alanyl-tRNA(Ala) + AMP + diphosphate. In terms of biological role, catalyzes the attachment of alanine to tRNA(Ala) in a two-step reaction: alanine is first activated by ATP to form Ala-AMP and then transferred to the acceptor end of tRNA(Ala). Also edits incorrectly charged Ser-tRNA(Ala) and Gly-tRNA(Ala) via its editing domain. The polypeptide is Alanine--tRNA ligase (Xanthomonas oryzae pv. oryzae (strain MAFF 311018)).